The following is a 210-amino-acid chain: Ribonuclease HII (210 aa).

The RNase H type-2 domain occupies 18–210 (GLIAGVDEVG…FKPVKALLGL (193 aa)). A divalent metal cation is bound by residues Asp24, Glu25, and Asp116.

The protein belongs to the RNase HII family. The cofactor is Mn(2+). Mg(2+) serves as cofactor.

It localises to the cytoplasm. The catalysed reaction is Endonucleolytic cleavage to 5'-phosphomonoester.. Functionally, endonuclease that specifically degrades the RNA of RNA-DNA hybrids. The chain is Ribonuclease HII from Shewanella baltica (strain OS223).